We begin with the raw amino-acid sequence, 716 residues long: Iron-sulfur clusters transporter atm1, mitochondrial (716 aa).

A mitochondrion-targeting transit peptide spans 1–18 (MAPSIKLSTMATSLHRAH). Topologically, residues 19–123 (GTSALLRRPR…PKGSWGDKAR (105 aa)) are mitochondrial matrix. Positions 57–87 (LFAPNGSAKDESKPAVSTVPKTTGRGPSDPL) are disordered. A helical membrane pass occupies residues 124-145 (VLLAIGLLVGGKVLNVQVPFYF). The ABC transmembrane type-1 domain maps to 124–414 (VLLAIGLLVG…LGSVYRELRQ (291 aa)). The Mitochondrial intermembrane portion of the chain corresponds to 146–168 (REIVDSLNIDFSTTGGSVTAVAG). Residues 169 to 192 (AMILGYGAARVGAVVSQELRNAVF) form a helical membrane-spanning segment. Over 193–241 (ASVAQKAIRKVARNTFEHLLNLDLSFHLSKQTGGLTRAIDRGTKGISFL) the chain is Mitochondrial matrix. A helical membrane pass occupies residues 242 to 265 (LTSMVFHIVPTALEISMVCGILTY). N266 is a topological domain (mitochondrial intermembrane). The chain crosses the membrane as a helical span at residues 267-287 (FGWQYAALTALTMVSYTAFTI). The Mitochondrial matrix portion of the chain corresponds to 288 to 353 (LTTAWRTKFR…NSIKVATSLA (66 aa)). Residues 293–297 (RTKFR) and 356–359 (NSGQ) each bind glutathione. Residues 354–372 (FLNSGQNIIFSSALTVMMY) form a helical membrane-spanning segment. Topologically, residues 373-387 (MGAHGVATGQLTVGD) are mitochondrial intermembrane. The chain crosses the membrane as a helical span at residues 388–409 (LVLINQLVFQLSVPLNFLGSVY). Position 406 (G406) interacts with glutathione. The Mitochondrial matrix portion of the chain corresponds to 410 to 716 (RELRQSLLDM…KEEVGEKKEA (307 aa)). The ABC transporter domain maps to 449–690 (IEFKDVTFGY…NGVYAQLWRA (242 aa)). ATP-binding positions include Y458 and 482–493 (GPSGCGKSTLLR). The segment at 697-716 (EEGEVSKKGEKEEVGEKKEA) is disordered. The segment covering 700 to 716 (EVSKKGEKEEVGEKKEA) has biased composition (basic and acidic residues).

Belongs to the ABC transporter superfamily. ABCB family. Heavy Metal importer (TC 3.A.1.210) subfamily. Homodimer.

The protein resides in the mitochondrion inner membrane. In terms of biological role, performs an essential function in the generation of cytoplasmic iron-sulfur proteins by mediating the ATP-dependent export of Fe/S cluster precursors synthesized by egt-3 and other mitochondrial proteins. Hydrolyzes ATP. Binds glutathione and may function by transporting a glutathione-conjugated iron-sulfur compound. In Neurospora crassa (strain ATCC 24698 / 74-OR23-1A / CBS 708.71 / DSM 1257 / FGSC 987), this protein is Iron-sulfur clusters transporter atm1, mitochondrial.